The following is a 145-amino-acid chain: D-aminoacyl-tRNA deacylase (145 aa).

Positions 137 to 138 match the Gly-cisPro motif, important for rejection of L-amino acids motif; sequence GP.

It belongs to the DTD family. Homodimer.

The protein resides in the cytoplasm. The catalysed reaction is glycyl-tRNA(Ala) + H2O = tRNA(Ala) + glycine + H(+). It catalyses the reaction a D-aminoacyl-tRNA + H2O = a tRNA + a D-alpha-amino acid + H(+). In terms of biological role, an aminoacyl-tRNA editing enzyme that deacylates mischarged D-aminoacyl-tRNAs. Also deacylates mischarged glycyl-tRNA(Ala), protecting cells against glycine mischarging by AlaRS. Acts via tRNA-based rather than protein-based catalysis; rejects L-amino acids rather than detecting D-amino acids in the active site. By recycling D-aminoacyl-tRNA to D-amino acids and free tRNA molecules, this enzyme counteracts the toxicity associated with the formation of D-aminoacyl-tRNA entities in vivo and helps enforce protein L-homochirality. The protein is D-aminoacyl-tRNA deacylase of Salmonella typhi.